The following is a 194-amino-acid chain: Putative 3-methyladenine DNA glycosylase (194 aa).

The protein belongs to the DNA glycosylase MPG family.

The sequence is that of Putative 3-methyladenine DNA glycosylase from Myxococcus xanthus (strain DK1622).